A 525-amino-acid chain; its full sequence is UPF0288 protein MA_3997 (525 aa).

This sequence belongs to the UPF0288 family.

The protein is UPF0288 protein MA_3997 of Methanosarcina acetivorans (strain ATCC 35395 / DSM 2834 / JCM 12185 / C2A).